Consider the following 326-residue polypeptide: Methyltransferase phqN (326 aa).

This sequence belongs to the class I-like SAM-binding methyltransferase superfamily. Erg6/SMT family.

Its pathway is alkaloid biosynthesis. Methyltransferase; part of the gene cluster that mediates the biosynthesis of paraherquamide, a fungal indole alkaloid that belongs to a family of natural products containing a characteristic bicyclo[2.2.2]diazaoctane core. The first steps in the biosynthesis of paraherquamide is the production of the beta-methyl-proline precursor from L-isoleucine. They require oxidation of a terminally hydroxylated L-isoleucine to the corresponding aldehyde by enzymes which have still to be identified. Spontaneous cyclization and dehydration would yield the 4-methyl pyrolline-5-carboxylic acid, which is then reduced by the pyrroline-5-carboxylate reductase phqD leading to the beta-methyl-proline precursor. The next step of paraherquamide biosynthesis involves coupling of beta-methyl-proline and L-tryptophan by the bimodular NRPS phqB, to produce a monooxopiperazine intermediate. The reductase (R) domain of phqB utilizes NADPH for hydride transfer to reduce the thioester bond of the T domain-tethered linear dipeptide to a hemithioaminal intermediate, which spontaneously cleaves the C-S bond to release the aldehyde product. This compound undergoes spontaneous cyclization and dehydration to give a dienamine which is reverse prenylated at C-2 by the reverse prenyltransferase phqJ. The other prenyltransferase present in the cluster, phqI may be a redundant gene in the pathway. During biosynthetic assembly, the key step to produce the polycyclic core is catalyzed by the bifunctional reductase and intramolecular [4+2] Diels-Alderase, phqE, resulting in formation of the [2.2.2] diazaoctane intermediate preparaherquamide. Following formation of preparaherquamide, an indole 2,3-epoxidation-initiated pinacol-like rearrangement is catalyzed by the phqK FAD-dependent monooxygenase. The prenyltransferase phqA, the cytochrome P450 monooxygenase phqL, and the FAD-linked oxidoreductase phqH (or the cytochrome P450 monooxygenase phqM), are proposed to be involved in the formation of the pyran ring. The FAD-dependent monooxygenase phqK is likely responsible for generation of the spiro-oxindole, and the N-methylation is likely mediated by the phqN methyltransferase leading to the isolable natural product paraherquamide F. However, the order of these biosynthetic steps has still to be determined. In late-stage paraherquamide biosynthesis, the third P450 monooxygenase, phqO, is probably responsible for the C-14 hydroxylation, transforming paraherquamide F to paraherquamide G, and paraherquamide E to the final product paraherquamide A. The expansion from the 6-membered ring pyran (in paraherquamides F and G) to the 7-membered dioxepin ring (in paraherquamides A and E) represents a poorly understood but intriguing process that probably involves the 2-oxoglutarate-dependent dioxygenase phqC. Finally, the remaining members of the paraherquamide cluster, including phqI as well as phqM (or phqH), do not have a clearly prescribed role and appear to be redundant. This chain is Methyltransferase phqN, found in Penicillium fellutanum.